The primary structure comprises 208 residues: Uracil phosphoribosyltransferase (208 aa).

Residues Arg78, Arg103, and 130-138 each bind 5-phospho-alpha-D-ribose 1-diphosphate; that span reads DPMLATGGS. Uracil is bound by residues Ile193 and 198–200; that span reads GDA. Asp199 is a binding site for 5-phospho-alpha-D-ribose 1-diphosphate.

It belongs to the UPRTase family. It depends on Mg(2+) as a cofactor.

The catalysed reaction is UMP + diphosphate = 5-phospho-alpha-D-ribose 1-diphosphate + uracil. It functions in the pathway pyrimidine metabolism; UMP biosynthesis via salvage pathway; UMP from uracil: step 1/1. With respect to regulation, allosterically activated by GTP. Its function is as follows. Catalyzes the conversion of uracil and 5-phospho-alpha-D-ribose 1-diphosphate (PRPP) to UMP and diphosphate. In Wolinella succinogenes (strain ATCC 29543 / DSM 1740 / CCUG 13145 / JCM 31913 / LMG 7466 / NCTC 11488 / FDC 602W) (Vibrio succinogenes), this protein is Uracil phosphoribosyltransferase.